A 317-amino-acid polypeptide reads, in one-letter code: Methyltransferase CPUR_05424 (317 aa).

The tract at residues 57–149 (DVGAGNGPYA…QLRPGGTFAC (93 aa)) is methyltransferase domain.

Belongs to the methyltransferase superfamily.

It functions in the pathway pigment biosynthesis. Methyltransferase; part of the ergochrome gene cluster responsible for the typical purple-black color of the ergot sclerotia. The ergochrome gene cluster produces several ergot pigments including the yellow ergochrome secalonic acid and its derivatives, as well as the red anthraquinones endocrocin and clavorubin. The pathway begins with the synthesis of atrochrysone thioester by the polyketide synthase (PKS) CPUR_05437. The atrochrysone carboxyl ACP thioesterase CPUR_05436 then breaks the thioester bond and releases the atrochrysone carboxylic acid from CPUR_05437. The atrochrysone carboxylic acid is then converted to atrochrysone which is further transformed into emodin anthrone. The next step is performed by the anthrone oxygenase CPUR_05434 that catalyzes the oxidation of emodinanthrone to emodin. Emodin is further modified to yield monodictyphenone via several steps involving CPUR_05427, CPUR_05428, CPUR_05429 and CPUR_05430. The short chain dehydrogenase/reductase CPUR_05418 then catalyzes the C-5 ketoreduction to give the xanthone skeleton of the monomeric units. Ergochromes formation requires further dimerization steps of different xanthone units, probably catalyzed by the cytochrome P450 monooxygenase CPUR_05419. CPUR_05425, CPUR_05426 and CPUR_05431 are unique to Claviceps, thus it is likely that they are involved in further modification of xanthone units or in their dimerization. The yellow ergochromes and the red anthraquinone pigments endocrocin and clavorubin are products from the same PKS derived precursors and the latter are likely shunt products in the pathway of xanthone biosynthesis. It is proposed that atrochrysone carboxylic acid released from the PKS CPUR_05437 can also be converted to endocrocin anthrone which is further oxidized into endocrocin by CPUR_05435. Endocrocin could be then modified to clavorubin, possibly by CPUR_05423 and CPUR_05431. Clavorubin is the principal anthraquinone metabolite produced by the cluster with a much higher yield compared to endocrocin. The polypeptide is Methyltransferase CPUR_05424 (Claviceps purpurea (strain 20.1) (Ergot fungus)).